Reading from the N-terminus, the 208-residue chain is Small ribosomal subunit protein uS4 (208 aa).

Positions 98–161 (LRLDNVVFRL…RKVVRISEAL (64 aa)) constitute an S4 RNA-binding domain.

The protein belongs to the universal ribosomal protein uS4 family. In terms of assembly, part of the 30S ribosomal subunit. Contacts protein S5. The interaction surface between S4 and S5 is involved in control of translational fidelity.

One of the primary rRNA binding proteins, it binds directly to 16S rRNA where it nucleates assembly of the body of the 30S subunit. Functionally, with S5 and S12 plays an important role in translational accuracy. The protein is Small ribosomal subunit protein uS4 of Anaeromyxobacter sp. (strain Fw109-5).